We begin with the raw amino-acid sequence, 466 residues long: MKKNNERVNTNPSLISKSYNMKKRPVIGTRRHFARKEIESDSDDEDDIFLAGERKKYLQNQSYERRKQKNEHGNNLTLQEELLRHEAYEKNEEIANENDVDQVNLMKYFVHMDNISPVTTNGSLKESLRKYSSIIAVNIFSETGDLKKGIAIFQDLSDAEQAVQYLSNCKIDGRLISATITNHPKRLPNAEHLESSTKTKDESQDKDKLTKLDRAKLEWLIQGLNCEKGSIGNLLCFAVEHVNNHVEITDAFLKEFFNDQPTDDTKVYDDDYINERGEKKLSLIYLMNDILFNGISGTSLVWRYRFSFEPHVERLLDDLYLFSKRLGGRIKEDIFCKKVVKVIEVWKTWIAFQEETLERAWRNFSGNTPQSPQINSAALKVETKNSWTAISEETEGLQDDEEYNGIPVDVNELLNVEFISQIPMSTETSSSSSPQPTEERKAKFKPSFTQGTFVSKRMRMHAEDLF.

A disordered region spans residues Met1–Lys22. A compositionally biased stretch (polar residues) spans Arg7–Tyr19. Ser40 and Ser42 each carry phosphoserine. The RRM domain maps to Tyr108–His183. Residues Arg186–Asp207 are disordered. The span at Pro188 to Asp207 shows a compositional bias: basic and acidic residues. Residues Leu209–Thr368 form the CID domain. Residue Ser371 is modified to Phosphoserine. Residues Ser425–Pro436 show a composition bias toward low complexity. Residues Ser425–Phe448 form a disordered region.

It is found in the nucleus. It localises to the cytoplasm. This is an uncharacterized protein from Schizosaccharomyces pombe (strain 972 / ATCC 24843) (Fission yeast).